The primary structure comprises 177 residues: Large ribosomal subunit protein uL6 (177 aa).

Belongs to the universal ribosomal protein uL6 family. In terms of assembly, part of the 50S ribosomal subunit.

In terms of biological role, this protein binds to the 23S rRNA, and is important in its secondary structure. It is located near the subunit interface in the base of the L7/L12 stalk, and near the tRNA binding site of the peptidyltransferase center. In Cupriavidus taiwanensis (strain DSM 17343 / BCRC 17206 / CCUG 44338 / CIP 107171 / LMG 19424 / R1) (Ralstonia taiwanensis (strain LMG 19424)), this protein is Large ribosomal subunit protein uL6.